A 172-amino-acid polypeptide reads, in one-letter code: Adenine phosphoribosyltransferase (172 aa).

The protein belongs to the purine/pyrimidine phosphoribosyltransferase family. As to quaternary structure, homodimer.

Its subcellular location is the cytoplasm. It catalyses the reaction AMP + diphosphate = 5-phospho-alpha-D-ribose 1-diphosphate + adenine. The protein operates within purine metabolism; AMP biosynthesis via salvage pathway; AMP from adenine: step 1/1. Functionally, catalyzes a salvage reaction resulting in the formation of AMP, that is energically less costly than de novo synthesis. The sequence is that of Adenine phosphoribosyltransferase from Clostridium botulinum (strain ATCC 19397 / Type A).